Reading from the N-terminus, the 552-residue chain is Asparagine--tRNA ligase, cytoplasmic (552 aa).

The segment at 1 to 23 is disordered; the sequence is MSQVYVNEKTGADSTDVSGSEQQ. A compositionally biased stretch (polar residues) spans 12–23; the sequence is ADSTDVSGSEQQ.

It belongs to the class-II aminoacyl-tRNA synthetase family.

The protein resides in the cytoplasm. The catalysed reaction is tRNA(Asn) + L-asparagine + ATP = L-asparaginyl-tRNA(Asn) + AMP + diphosphate + H(+). The sequence is that of Asparagine--tRNA ligase, cytoplasmic (DED81) from Debaryomyces hansenii (strain ATCC 36239 / CBS 767 / BCRC 21394 / JCM 1990 / NBRC 0083 / IGC 2968) (Yeast).